The sequence spans 1115 residues: Iron-regulated protein FrpA (1115 aa).

7 Hemolysin-type calcium-binding repeats span residues 755-772 (FGHN…NDTL), 773-790 (IGGA…SDTY), 901-918 (NGGL…NDLL), 919-936 (NGDA…NDTL), 937-954 (DGGE…NDAL), 955-972 (NGGE…NDTL), and 973-990 (IGGA…SDTY).

The protein belongs to the RTX prokaryotic toxin (TC 1.C.11) family.

It localises to the cell outer membrane. Its subcellular location is the secreted. Its function is as follows. May participate in the pathogenesis of meningococcal disease. This chain is Iron-regulated protein FrpA (frpA), found in Neisseria meningitidis serogroup C.